Consider the following 412-residue polypeptide: 2,3-bisphosphoglycerate-independent phosphoglycerate mutase (412 aa).

Belongs to the BPG-independent phosphoglycerate mutase family. A-PGAM subfamily.

The catalysed reaction is (2R)-2-phosphoglycerate = (2R)-3-phosphoglycerate. The protein operates within carbohydrate degradation; glycolysis; pyruvate from D-glyceraldehyde 3-phosphate: step 3/5. In terms of biological role, catalyzes the interconversion of 2-phosphoglycerate and 3-phosphoglycerate. This chain is 2,3-bisphosphoglycerate-independent phosphoglycerate mutase, found in Methanobrevibacter smithii (strain ATCC 35061 / DSM 861 / OCM 144 / PS).